The sequence spans 180 residues: Putative 3-methyladenine DNA glycosylase (180 aa).

The protein belongs to the DNA glycosylase MPG family.

The sequence is that of Putative 3-methyladenine DNA glycosylase from Wolbachia pipientis wMel.